The primary structure comprises 477 residues: Aspartyl/glutamyl-tRNA(Asn/Gln) amidotransferase subunit B (477 aa).

The protein belongs to the GatB/GatE family. GatB subfamily. In terms of assembly, heterotrimer of A, B and C subunits.

The enzyme catalyses L-glutamyl-tRNA(Gln) + L-glutamine + ATP + H2O = L-glutaminyl-tRNA(Gln) + L-glutamate + ADP + phosphate + H(+). The catalysed reaction is L-aspartyl-tRNA(Asn) + L-glutamine + ATP + H2O = L-asparaginyl-tRNA(Asn) + L-glutamate + ADP + phosphate + 2 H(+). Its function is as follows. Allows the formation of correctly charged Asn-tRNA(Asn) or Gln-tRNA(Gln) through the transamidation of misacylated Asp-tRNA(Asn) or Glu-tRNA(Gln) in organisms which lack either or both of asparaginyl-tRNA or glutaminyl-tRNA synthetases. The reaction takes place in the presence of glutamine and ATP through an activated phospho-Asp-tRNA(Asn) or phospho-Glu-tRNA(Gln). The protein is Aspartyl/glutamyl-tRNA(Asn/Gln) amidotransferase subunit B of Legionella pneumophila subsp. pneumophila (strain Philadelphia 1 / ATCC 33152 / DSM 7513).